The following is a 129-amino-acid chain: Cuticle protein 12.5 (129 aa).

10 repeat units span residues 7–10, 15–18, 23–26, 28–31, 37–40, 67–70, 79–82, 91–94, 103–106, and 117–120.

Component of the cuticle of migratory locust which contains more than 100 different structural proteins. In Locusta migratoria (Migratory locust), this protein is Cuticle protein 12.5.